Consider the following 93-residue polypeptide: Pyrimidine/purine nucleoside phosphorylase (93 aa).

Belongs to the nucleoside phosphorylase PpnP family.

It carries out the reaction a purine D-ribonucleoside + phosphate = a purine nucleobase + alpha-D-ribose 1-phosphate. The catalysed reaction is adenosine + phosphate = alpha-D-ribose 1-phosphate + adenine. It catalyses the reaction cytidine + phosphate = cytosine + alpha-D-ribose 1-phosphate. The enzyme catalyses guanosine + phosphate = alpha-D-ribose 1-phosphate + guanine. It carries out the reaction inosine + phosphate = alpha-D-ribose 1-phosphate + hypoxanthine. The catalysed reaction is thymidine + phosphate = 2-deoxy-alpha-D-ribose 1-phosphate + thymine. It catalyses the reaction uridine + phosphate = alpha-D-ribose 1-phosphate + uracil. The enzyme catalyses xanthosine + phosphate = alpha-D-ribose 1-phosphate + xanthine. Its function is as follows. Catalyzes the phosphorolysis of diverse nucleosides, yielding D-ribose 1-phosphate and the respective free bases. Can use uridine, adenosine, guanosine, cytidine, thymidine, inosine and xanthosine as substrates. Also catalyzes the reverse reactions. This Aliivibrio fischeri (strain ATCC 700601 / ES114) (Vibrio fischeri) protein is Pyrimidine/purine nucleoside phosphorylase.